The sequence spans 304 residues: Non-specific ribonucleoside hydrolase RihC (304 aa).

The active site involves histidine 233.

It belongs to the IUNH family. RihC subfamily.

Its function is as follows. Hydrolyzes both purine and pyrimidine ribonucleosides with a broad-substrate specificity. The protein is Non-specific ribonucleoside hydrolase RihC of Escherichia coli (strain 55989 / EAEC).